The primary structure comprises 132 residues: Small ribosomal subunit protein uS8 (132 aa).

The protein belongs to the universal ribosomal protein uS8 family. Part of the 30S ribosomal subunit. Contacts proteins S5 and S12.

Its function is as follows. One of the primary rRNA binding proteins, it binds directly to 16S rRNA central domain where it helps coordinate assembly of the platform of the 30S subunit. The chain is Small ribosomal subunit protein uS8 from Stenotrophomonas maltophilia (strain K279a).